The primary structure comprises 362 residues: uncharacterized protein (362 aa).

This is an uncharacterized protein from Caenorhabditis elegans.